Here is a 255-residue protein sequence, read N- to C-terminus: 3-dehydroquinate dehydratase (255 aa).

Residues 46–48 and arginine 82 contribute to the 3-dehydroquinate site; that span reads EWR. Histidine 143 (proton donor/acceptor) is an active-site residue. The active-site Schiff-base intermediate with substrate is lysine 170. 3-dehydroquinate-binding residues include arginine 213, serine 232, and glutamine 236.

It belongs to the type-I 3-dehydroquinase family. In terms of assembly, homodimer.

It carries out the reaction 3-dehydroquinate = 3-dehydroshikimate + H2O. Its pathway is metabolic intermediate biosynthesis; chorismate biosynthesis; chorismate from D-erythrose 4-phosphate and phosphoenolpyruvate: step 3/7. Involved in the third step of the chorismate pathway, which leads to the biosynthesis of aromatic amino acids. Catalyzes the cis-dehydration of 3-dehydroquinate (DHQ) and introduces the first double bond of the aromatic ring to yield 3-dehydroshikimate. This chain is 3-dehydroquinate dehydratase, found in Bacillus subtilis (strain 168).